A 419-amino-acid chain; its full sequence is Gamma-glutamyl phosphate reductase (419 aa).

It belongs to the gamma-glutamyl phosphate reductase family.

It is found in the cytoplasm. The catalysed reaction is L-glutamate 5-semialdehyde + phosphate + NADP(+) = L-glutamyl 5-phosphate + NADPH + H(+). The protein operates within amino-acid biosynthesis; L-proline biosynthesis; L-glutamate 5-semialdehyde from L-glutamate: step 2/2. In terms of biological role, catalyzes the NADPH-dependent reduction of L-glutamate 5-phosphate into L-glutamate 5-semialdehyde and phosphate. The product spontaneously undergoes cyclization to form 1-pyrroline-5-carboxylate. The polypeptide is Gamma-glutamyl phosphate reductase (Bordetella parapertussis (strain 12822 / ATCC BAA-587 / NCTC 13253)).